Here is a 487-residue protein sequence, read N- to C-terminus: Cytochrome P450 2C5 (487 aa).

Cysteine 432 contacts heme.

This sequence belongs to the cytochrome P450 family. Requires heme as cofactor.

The protein resides in the endoplasmic reticulum membrane. Its subcellular location is the microsome membrane. It catalyses the reaction an organic molecule + reduced [NADPH--hemoprotein reductase] + O2 = an alcohol + oxidized [NADPH--hemoprotein reductase] + H2O + H(+). Functionally, cytochromes P450 are a group of heme-thiolate monooxygenases. In liver microsomes, this enzyme is involved in an NADPH-dependent electron transport pathway. It oxidizes a variety of structurally unrelated compounds, including steroids, fatty acids, and xenobiotics. The sequence is that of Cytochrome P450 2C5 (CYP2C5) from Oryctolagus cuniculus (Rabbit).